The primary structure comprises 162 residues: MDEAYYSGNLESVLGYVSDMHTELASISQLVIAKIETIDNDILNKDIVNFIMCRSNLDNPFISFLDTVYTIIDQEIYQTELINSLDDNEIIDCIVNKFMSFYKDNLENIVDAIITLKYIMNNPDFKTTYAEVLGSRIADIDIKQVIRENILQLSNNIRERYL.

Belongs to the poxviridae A49 protein family.

The protein is Protein A49 of Homo sapiens (Human).